The primary structure comprises 155 residues: Small ribosomal subunit protein uS7 (155 aa).

Belongs to the universal ribosomal protein uS7 family. As to quaternary structure, part of the 30S ribosomal subunit. Contacts proteins S9 and S11.

Functionally, one of the primary rRNA binding proteins, it binds directly to 16S rRNA where it nucleates assembly of the head domain of the 30S subunit. Is located at the subunit interface close to the decoding center, probably blocks exit of the E-site tRNA. The polypeptide is Small ribosomal subunit protein uS7 (Xylella fastidiosa (strain M23)).